The sequence spans 510 residues: D-allose import ATP-binding protein AlsA (510 aa).

2 ABC transporter domains span residues 6–245 (ISMA…VGRE) and 260–509 (LAHE…ALPQ). 38–45 (GENGAGKS) provides a ligand contact to ATP.

The protein belongs to the ABC transporter superfamily. D-allose importer (TC 3.A.1.2.6) family. As to quaternary structure, the complex is composed of two ATP-binding proteins (AlsA), two transmembrane proteins (AlsC) and a solute-binding protein (AlsB).

It is found in the cell inner membrane. The catalysed reaction is D-allose(out) + ATP + H2O = D-allose(in) + ADP + phosphate + H(+). Part of the ABC transporter complex AlsBAC involved in D-allose import. Probably responsible for energy coupling to the transport system. This chain is D-allose import ATP-binding protein AlsA (alsA), found in Escherichia coli (strain K12).